The primary structure comprises 423 residues: Gamma-glutamyl phosphate reductase (423 aa).

The protein belongs to the gamma-glutamyl phosphate reductase family.

It localises to the cytoplasm. The enzyme catalyses L-glutamate 5-semialdehyde + phosphate + NADP(+) = L-glutamyl 5-phosphate + NADPH + H(+). It participates in amino-acid biosynthesis; L-proline biosynthesis; L-glutamate 5-semialdehyde from L-glutamate: step 2/2. Catalyzes the NADPH-dependent reduction of L-glutamate 5-phosphate into L-glutamate 5-semialdehyde and phosphate. The product spontaneously undergoes cyclization to form 1-pyrroline-5-carboxylate. In Desulfovibrio desulfuricans (strain ATCC 27774 / DSM 6949 / MB), this protein is Gamma-glutamyl phosphate reductase.